The sequence spans 213 residues: Uracil phosphoribosyltransferase (213 aa).

Residues arginine 78, arginine 103, and 130–138 (DPMLATGGS) each bind 5-phospho-alpha-D-ribose 1-diphosphate. Uracil-binding positions include isoleucine 193 and 198 to 200 (GDA). 5-phospho-alpha-D-ribose 1-diphosphate is bound at residue aspartate 199.

This sequence belongs to the UPRTase family. It depends on Mg(2+) as a cofactor.

The catalysed reaction is UMP + diphosphate = 5-phospho-alpha-D-ribose 1-diphosphate + uracil. Its pathway is pyrimidine metabolism; UMP biosynthesis via salvage pathway; UMP from uracil: step 1/1. Allosterically activated by GTP. Its function is as follows. Catalyzes the conversion of uracil and 5-phospho-alpha-D-ribose 1-diphosphate (PRPP) to UMP and diphosphate. The chain is Uracil phosphoribosyltransferase from Bordetella pertussis (strain Tohama I / ATCC BAA-589 / NCTC 13251).